The primary structure comprises 216 residues: UPF0301 protein Nham_3550 (216 aa).

Residues 1-10 (MSAARKRPGT) show a composition bias toward basic residues. A disordered region spans residues 1-25 (MSAARKRPGTGRRQTDDADTGAPDQ).

The protein belongs to the UPF0301 (AlgH) family.

The protein is UPF0301 protein Nham_3550 of Nitrobacter hamburgensis (strain DSM 10229 / NCIMB 13809 / X14).